The primary structure comprises 37 residues: Large ribosomal subunit protein bL36c (37 aa).

Belongs to the bacterial ribosomal protein bL36 family.

The protein resides in the plastid. It is found in the chloroplast. The sequence is that of Large ribosomal subunit protein bL36c from Phalaenopsis aphrodite subsp. formosana (Moth orchid).